The sequence spans 195 residues: Cysteine/O-acetylserine efflux protein (195 aa).

Over 1-7 (MTPTLLS) the chain is Periplasmic. A helical membrane pass occupies residues 8 to 28 (AFWTYTLITAMTPGPNNILAL). Residues 29 to 46 (SSATSHGFRQSTRVLAGM) lie on the Cytoplasmic side of the membrane. A helical transmembrane segment spans residues 47 to 67 (SLGFLIVMLLCAGISFSLAVI). At 68–69 (DP) the chain is on the periplasmic side. The chain crosses the membrane as a helical span at residues 70–90 (AAVHLLSWAGAAYIVWLAWKI). Residues 91 to 104 (ATSPTKEDGLQTKP) are Cytoplasmic-facing. Residues 105–125 (ISFWASFALQFVNVKIILYGV) form a helical membrane-spanning segment. Residues 126–141 (TALSTFVLPQTQALSW) lie on the Periplasmic side of the membrane. The chain crosses the membrane as a helical span at residues 142 to 162 (VVGVSVLLAMIGTFGNVCWAL). Over 163 to 176 (AGHLFQRLFRQYGR) the chain is Cytoplasmic. A helical membrane pass occupies residues 177–194 (QLNIVLALLLVYCAVRIF). Position 195 (tyrosine 195) is a topological domain, periplasmic.

It belongs to the Rht family.

The protein localises to the cell inner membrane. The catalysed reaction is O-acetyl-L-serine(in) = O-acetyl-L-serine(out). It carries out the reaction L-cysteine(in) = L-cysteine(out). Functionally, exporter of O-acetylserine (OAS) and cysteine. The protein is Cysteine/O-acetylserine efflux protein (eamB) of Escherichia coli O1:K1 / APEC.